Reading from the N-terminus, the 755-residue chain is Periplasmic nitrate reductase (755 aa).

A signal peptide (tat-type signal) is located at residues 1 to 32 (MSTSRRDFLKYFAMSAAVAAASGAGFGSLALA). In terms of domain architecture, 4Fe-4S Mo/W bis-MGD-type spans 38–93 (EKWVKGVCRYCGTGCGVLVGVKDGKAVAIQGDPNNHNAGLLCLKGSLLIPVLNSKE). Positions 45, 48, 52, and 79 each coordinate [4Fe-4S] cluster. Mo-bis(molybdopterin guanine dinucleotide)-binding positions include Lys81, Gln143, Asn168, Cys172, 208 to 212 (NTSEA), 236 to 238 (DPR), 255 to 257 (GTD), Met340, Gln344, Asn450, 475 to 477 (IEA), and 647 to 656 (SMRVIDHWHT). Residues 648 to 653 (MRVIDH) and Phe721 contribute to the substrate site. Asn729 and Lys746 together coordinate Mo-bis(molybdopterin guanine dinucleotide).

It belongs to the prokaryotic molybdopterin-containing oxidoreductase family. NasA/NapA/NarB subfamily. Monomer. Component of the periplasmic nitrate reductase NapAB complex composed of NapA and NapB. [4Fe-4S] cluster is required as a cofactor. It depends on Mo-bis(molybdopterin guanine dinucleotide) as a cofactor. In terms of processing, predicted to be exported by the Tat system. The position of the signal peptide cleavage has been experimentally proven.

It is found in the periplasm. It carries out the reaction 2 Fe(II)-[cytochrome] + nitrate + 2 H(+) = 2 Fe(III)-[cytochrome] + nitrite + H2O. With respect to regulation, activated by potassium and sodium ions and inhibited by magnesium and calcium ions. Its function is as follows. Catalytic subunit of the periplasmic nitrate reductase complex NapAB. Receives electrons from NapB and catalyzes the reduction of nitrate to nitrite. This Desulfovibrio desulfuricans (strain ATCC 27774 / DSM 6949 / MB) protein is Periplasmic nitrate reductase.